The chain runs to 200 residues: Recombination protein RecR (200 aa).

Residues 58–75 (CPCCFCLKNFPESQCEFC) form a C4-type zinc finger. The region spanning 82 to 177 (STLCIVASPK…SISRLALGLP (96 aa)) is the Toprim domain.

It belongs to the RecR family.

In terms of biological role, may play a role in DNA repair. It seems to be involved in an RecBC-independent recombinational process of DNA repair. It may act with RecF and RecO. The polypeptide is Recombination protein RecR (Chlamydia felis (strain Fe/C-56) (Chlamydophila felis)).